The sequence spans 173 residues: Nicotinamide-nucleotide adenylyltransferase (173 aa).

This sequence belongs to the archaeal NMN adenylyltransferase family.

It is found in the cytoplasm. The catalysed reaction is beta-nicotinamide D-ribonucleotide + ATP + H(+) = diphosphate + NAD(+). Its pathway is cofactor biosynthesis; NAD(+) biosynthesis; NAD(+) from nicotinamide D-ribonucleotide: step 1/1. The protein is Nicotinamide-nucleotide adenylyltransferase of Methanosarcina mazei (strain ATCC BAA-159 / DSM 3647 / Goe1 / Go1 / JCM 11833 / OCM 88) (Methanosarcina frisia).